Consider the following 379-residue polypeptide: Botryococcene C-methyltransferase (379 aa).

The helical transmembrane segment at 17–37 (LLTWKGAAGLAAAVALGYIII) threads the bilayer.

This sequence belongs to the class I-like SAM-binding methyltransferase superfamily. Erg6/SMT family.

Its subcellular location is the microsome membrane. The catalysed reaction is C30 botryococcene + 2 S-adenosyl-L-methionine = 3,20-dimethyl-1,2,21,22-tetradehydro-2,3,20,21-tetrahydrobotryococcene + 2 S-adenosyl-L-homocysteine + 2 H(+). Functionally, converts botryococcene to mono- and dimethyl derivatives, but not to tri- and tetramethylated products. Unable to methylate cycloartenol, zymosterol or lanosterol, but can also use squalene as substrate. Methylates both C-3 and C22 positions, but only C-3 position in monomethylated squalenes. In contrast, monomethylated botryococcene occured mainly at the C-20 position yielding showacene, but also at the C-3 position yielding isoshowacene. The chain is Botryococcene C-methyltransferase (TMT-3) from Botryococcus braunii (Green alga).